The following is a 397-amino-acid chain: Subtilisin-like protease 12 (397 aa).

The N-terminal stretch at 1-19 (MSIFKLMVIYFTLFWVVNA) is a signal peptide. The propeptide occupies 20 to 116 (AQLLDLDSHG…VEPNREMKAA (97 aa)). In terms of domain architecture, Inhibitor I9 spans 35–115 (YIVVMKNGVS…FVEPNREMKA (81 aa)). 3 N-linked (GlcNAc...) asparagine glycosylation sites follow: asparagine 123, asparagine 136, and asparagine 150. Residues 125–397 (TWGLARISHM…DKLLYNGSGA (273 aa)) form the Peptidase S8 domain. Catalysis depends on charge relay system residues aspartate 157 and histidine 188. 3 N-linked (GlcNAc...) asparagine glycosylation sites follow: asparagine 249, asparagine 305, and asparagine 334. The active-site Charge relay system is the serine 343. Asparagine 385 and asparagine 393 each carry an N-linked (GlcNAc...) asparagine glycan.

This sequence belongs to the peptidase S8 family.

The protein resides in the secreted. Secreted subtilisin-like serine protease with keratinolytic activity that contributes to pathogenicity. The chain is Subtilisin-like protease 12 (SUB12) from Arthroderma gypseum (strain ATCC MYA-4604 / CBS 118893) (Microsporum gypseum).